Reading from the N-terminus, the 419-residue chain is L-rhamnose isomerase (419 aa).

3 residues coordinate Mn(2+): H262, D294, and D296.

This sequence belongs to the rhamnose isomerase family. Homotetramer. Mn(2+) serves as cofactor.

The protein localises to the cytoplasm. The catalysed reaction is L-rhamnopyranose = L-rhamnulose. It participates in carbohydrate degradation; L-rhamnose degradation; glycerone phosphate from L-rhamnose: step 1/3. Its function is as follows. Catalyzes the interconversion of L-rhamnose and L-rhamnulose. The sequence is that of L-rhamnose isomerase from Shigella boydii serotype 4 (strain Sb227).